A 236-amino-acid polypeptide reads, in one-letter code: Leucyl/phenylalanyl-tRNA--protein transferase (236 aa).

Belongs to the L/F-transferase family.

It is found in the cytoplasm. It catalyses the reaction N-terminal L-lysyl-[protein] + L-leucyl-tRNA(Leu) = N-terminal L-leucyl-L-lysyl-[protein] + tRNA(Leu) + H(+). The catalysed reaction is N-terminal L-arginyl-[protein] + L-leucyl-tRNA(Leu) = N-terminal L-leucyl-L-arginyl-[protein] + tRNA(Leu) + H(+). The enzyme catalyses L-phenylalanyl-tRNA(Phe) + an N-terminal L-alpha-aminoacyl-[protein] = an N-terminal L-phenylalanyl-L-alpha-aminoacyl-[protein] + tRNA(Phe). In terms of biological role, functions in the N-end rule pathway of protein degradation where it conjugates Leu, Phe and, less efficiently, Met from aminoacyl-tRNAs to the N-termini of proteins containing an N-terminal arginine or lysine. The polypeptide is Leucyl/phenylalanyl-tRNA--protein transferase (Vibrio campbellii (strain ATCC BAA-1116)).